A 164-amino-acid chain; its full sequence is FMN reductase (NADH) RutF (164 aa).

Belongs to the non-flavoprotein flavin reductase family. RutF subfamily.

The enzyme catalyses FMNH2 + NAD(+) = FMN + NADH + 2 H(+). Functionally, catalyzes the reduction of FMN to FMNH2 which is used to reduce pyrimidine by RutA via the Rut pathway. This chain is FMN reductase (NADH) RutF, found in Enterobacter sp. (strain 638).